The chain runs to 260 residues: 14-3-3 protein 4 (260 aa).

A disordered region spans residues 238–260; sequence DNADDVGDDIKEASKPESGEGQQ. The span at 245 to 260 shows a compositional bias: basic and acidic residues; it reads DDIKEASKPESGEGQQ.

The protein belongs to the 14-3-3 family. In terms of assembly, homodimer.

This chain is 14-3-3 protein 4 (TFT4), found in Solanum lycopersicum (Tomato).